The sequence spans 95 residues: Acylphosphatase (95 aa).

An Acylphosphatase-like domain is found at 5 to 93 (RAHLYIKGKV…GEFQDFRILP (89 aa)). Residues arginine 20 and asparagine 38 contribute to the active site.

Belongs to the acylphosphatase family.

It carries out the reaction an acyl phosphate + H2O = a carboxylate + phosphate + H(+). The sequence is that of Acylphosphatase (acyP) from Pyrobaculum islandicum (strain DSM 4184 / JCM 9189 / GEO3).